Reading from the N-terminus, the 264-residue chain is Ribosomal protein L11 methyltransferase (264 aa).

S-adenosyl-L-methionine is bound by residues Thr116, Gly137, Asp159, and Asn200.

The protein belongs to the methyltransferase superfamily. PrmA family.

It localises to the cytoplasm. The enzyme catalyses L-lysyl-[protein] + 3 S-adenosyl-L-methionine = N(6),N(6),N(6)-trimethyl-L-lysyl-[protein] + 3 S-adenosyl-L-homocysteine + 3 H(+). Methylates ribosomal protein L11. This chain is Ribosomal protein L11 methyltransferase, found in Thermotoga maritima (strain ATCC 43589 / DSM 3109 / JCM 10099 / NBRC 100826 / MSB8).